Consider the following 645-residue polypeptide: 1,4-alpha-glucan branching enzyme GlgB (645 aa).

The active-site Nucleophile is the Asp309. The Proton donor role is filled by Glu352. Residues 619–645 (VKTRKGSKKQDGSKTKVRSNVTSRGKR) are disordered. A compositionally biased stretch (polar residues) spans 636–645 (RSNVTSRGKR).

It belongs to the glycosyl hydrolase 13 family. GlgB subfamily. Monomer.

It carries out the reaction Transfers a segment of a (1-&gt;4)-alpha-D-glucan chain to a primary hydroxy group in a similar glucan chain.. Its pathway is glycan biosynthesis; glycogen biosynthesis. In terms of biological role, catalyzes the formation of the alpha-1,6-glucosidic linkages in glycogen by scission of a 1,4-alpha-linked oligosaccharide from growing alpha-1,4-glucan chains and the subsequent attachment of the oligosaccharide to the alpha-1,6 position. The protein is 1,4-alpha-glucan branching enzyme GlgB of Bacillus anthracis (strain CDC 684 / NRRL 3495).